We begin with the raw amino-acid sequence, 228 residues long: Ferric nitrobindin-like protein (228 aa).

The disordered stretch occupies residues 1-21 (MTSDEVRDGAGSPADSSKGNK). A GXWXGXG motif is present at residues 75-81 (GVWRGEG).

Belongs to the nitrobindin family.

The sequence is that of Ferric nitrobindin-like protein from Mycobacterium leprae (strain TN).